Consider the following 131-residue polypeptide: uncharacterized protein (131 aa).

This is an uncharacterized protein from Homo sapiens (Human).